A 391-amino-acid polypeptide reads, in one-letter code: Chalcone synthase (391 aa).

The active site involves C164.

The protein belongs to the thiolase-like superfamily. Chalcone/stilbene synthases family.

It catalyses the reaction (E)-4-coumaroyl-CoA + 3 malonyl-CoA + 3 H(+) = 2',4,4',6'-tetrahydroxychalcone + 3 CO2 + 4 CoA. The protein operates within secondary metabolite biosynthesis; flavonoid biosynthesis. In terms of biological role, the primary product of this enzyme is 4,2',4',6'-tetrahydroxychalcone (also termed naringenin-chalcone or chalcone) which can under specific conditions spontaneously isomerize into naringenin. The protein is Chalcone synthase (CHS) of Dianthus caryophyllus (Carnation).